Here is a 976-residue protein sequence, read N- to C-terminus: Villin-2 (976 aa).

Gelsolin-like repeat units lie at residues Phe27 to Gly77, Ile148 to Ala188, Gly260 to Lys302, Gly399 to Asp450, Asn531 to Glu571, and Phe633 to Gln674. The segment at Asn769 to Phe917 is disordered. The span at Arg782 to Ala794 shows a compositional bias: basic and acidic residues. Composition is skewed to low complexity over residues Glu795–Lys812, Ser823–Ala841, and Asp848–Ser858. The residue at position 890 (Ser890) is a Phosphoserine. Positions Ser908–Phe917 are enriched in polar residues. Positions Gln911 to Phe976 constitute an HP domain.

Belongs to the villin/gelsolin family. In terms of tissue distribution, expressed in all tissues examined. Mainly detected in the root epidermis and vasculature. Expressed in the root cap.

The protein localises to the cytoplasm. The protein resides in the cytoskeleton. Ca(2+)-regulated actin-binding protein. Involved in actin filaments bundling. Caps the barbed end of actin filaments and is able to sever them in a calcium-dependent manner. Required for the construction of actin collars in pollen tubes. Acts redundantly with VLN5 (AC Q9LVC6) to generate thick actin filament bundles and to regulate polarized pollen tube growth. Acts redundantly with VLN3 (AC O81645) to regulate directional organ growth and in sclerenchyma development. In Arabidopsis thaliana (Mouse-ear cress), this protein is Villin-2.